The primary structure comprises 1435 residues: Neuropathy target esterase sws (1435 aa).

At 1-35 (MDVLELLRVSGSNMYYSTFLADAWCYYISNQITMT) the chain is on the lumenal side. The helical transmembrane segment at 36-56 (MYLYCALGVLSMLFIGWFVYF) threads the bilayer. Residues 57–1435 (KRLARLRLRH…NTNNETKNYL (1379 aa)) lie on the Cytoplasmic side of the membrane. 176–303 (IFGHFEKPIF…IRVIQVIMIR (128 aa)) lines the a nucleoside 3',5'-cyclic phosphate pocket. The segment covering 361–372 (AASGTAGSTHTA) has biased composition (low complexity). Disordered stretches follow at residues 361–405 (AASG…ELSG) and 422–452 (NSYPPLYHQRESDGNLSTRRGSITQQEQPEV). Over residues 435–449 (GNLSTRRGSITQQEQ) the composition is skewed to polar residues. S443 is subject to Phosphoserine. Residues 474–601 (ELGL…VVRR) and 590–717 (IVLD…LSHR) contribute to the a nucleoside 3',5'-cyclic phosphate site. The 167-residue stretch at 944–1110 (LVLGGGGARG…VNNLPGHLWR (167 aa)) folds into the PNPLA domain. The GXGXXG signature appears at 948 to 953 (GGGARG). The short motif at 975 to 979 (GVSIG) is the GXSXG element. Catalysis depends on S977, which acts as the Nucleophile. D1097 functions as the Proton acceptor in the catalytic mechanism. The DGA/G signature appears at 1097 to 1099 (DGG). The segment at 1308 to 1435 (MDKATQSTPP…NTNNETKNYL (128 aa)) is disordered. Polar residues predominate over residues 1311–1322 (ATQSTPPLQSKA). 2 stretches are compositionally biased toward basic and acidic residues: residues 1330-1361 (SKEEARHEWEIKREQKQELAREQELERERELS) and 1393-1424 (MDKKKTKDNDRDEVRGSAEDTGKEKEEDKENR). A compositionally biased stretch (polar residues) spans 1425-1435 (SNTNNETKNYL).

Belongs to the NTE family. As to quaternary structure, interacts with Pka-C3; interaction inhibits the catalytic function of Pka-C3 and the esterase activity of sws.

The protein localises to the endoplasmic reticulum membrane. It catalyses the reaction a 1-acyl-sn-glycero-3-phosphocholine + H2O = sn-glycerol 3-phosphocholine + a fatty acid + H(+). Functionally, phospholipase B that deacylates intracellular phosphatidylcholine (PtdCho), generating glycerophosphocholine (GroPtdCho). This deacylation occurs at both sn-2 and sn-1 positions of PtdCho. Its specific chemical modification by certain organophosphorus (OP) compounds leads to distal axonopathy. Plays a role in the signaling mechanism between neurons and glia that regulates glia wrapping during development of the adult brain. Essential for membrane lipid homeostasis and cell survival in both neurons and glia of the adult brain. This Drosophila persimilis (Fruit fly) protein is Neuropathy target esterase sws.